Reading from the N-terminus, the 358-residue chain is MRKTVIVAMSGGVDSSVVAYLLKKQGEYNVVGLFMKNWGEQDENGECTATKDFRDVERIAEQLSIPYYTVSFSKEYKERVFSRFLREYANGYTPNPDVLCNREIKFDLLQKKVLELKGDFLATGHYCRGGADGTGLSRGIDPNKDQSYFLCGTPKDALSNVLFPLGGMYKTEVRRIAQEAGLATATKKDSTGICFIGKRPFKSFLEQFVADSPGDIIDFDTQQVVGRHEGAHYYTIGQRRGLNIGGMEKPCYVLSKNMEKNIVYIVRGEDHPLLYRQELLAKELNWFVPLQEPMICSAKVRYRSPDEKCSVYPLEDGTVKVIFDVPVKAVTPGQTVAFYQGDICLGGGVIEVPMIHQL.

Residues 8-15 (AMSGGVDS) and Met35 contribute to the ATP site. An interaction with target base in tRNA region spans residues 95-97 (NPD). The active-site Nucleophile is Cys100. Residues Cys100 and Cys194 are joined by a disulfide bond. Gly124 is a binding site for ATP. Residues 144 to 146 (KDQ) are interaction with tRNA. Cys194 functions as the Cysteine persulfide intermediate in the catalytic mechanism. The tract at residues 301–302 (RY) is interaction with tRNA.

The protein belongs to the MnmA/TRMU family.

It localises to the cytoplasm. The enzyme catalyses S-sulfanyl-L-cysteinyl-[protein] + uridine(34) in tRNA + AH2 + ATP = 2-thiouridine(34) in tRNA + L-cysteinyl-[protein] + A + AMP + diphosphate + H(+). Functionally, catalyzes the 2-thiolation of uridine at the wobble position (U34) of tRNA, leading to the formation of s(2)U34. The sequence is that of tRNA-specific 2-thiouridylase MnmA from Chlamydia trachomatis serovar L2 (strain ATCC VR-902B / DSM 19102 / 434/Bu).